We begin with the raw amino-acid sequence, 421 residues long: Synaptotagmin-15 (421 aa).

Residues 1-4 (MAEQ) are Extracellular-facing. The chain crosses the membrane as a helical; Signal-anchor for type III membrane protein span at residues 5–29 (LALVIGGTIGGLLLLLLIGASCCLW). The Cytoplasmic segment spans residues 30–421 (RRFCATLTYE…WHALCRTTEP (392 aa)). Positions 47–68 (MATTAASSGQRDRPCQPHARTQ) are disordered. C2 domains lie at 147–264 (CLGR…RRVI) and 278–399 (EFGD…EHWD).

It belongs to the synaptotagmin family. Homodimer.

The protein localises to the cell membrane. Functionally, may be involved in the trafficking and exocytosis of secretory vesicles in non-neuronal tissues. This Homo sapiens (Human) protein is Synaptotagmin-15 (SYT15).